A 153-amino-acid chain; its full sequence is Flagellar assembly factor FliW (153 aa).

Belongs to the FliW family. In terms of assembly, interacts with translational regulator CsrA and flagellin(s).

It is found in the cytoplasm. In terms of biological role, acts as an anti-CsrA protein, binds CsrA and prevents it from repressing translation of its target genes, one of which is flagellin. Binds to flagellin and participates in the assembly of the flagellum. This chain is Flagellar assembly factor FliW, found in Heliobacterium modesticaldum (strain ATCC 51547 / Ice1).